The chain runs to 360 residues: Phospho-N-acetylmuramoyl-pentapeptide-transferase (360 aa).

10 helical membrane passes run 21 to 41 (YITFRAIMALLTAMGIGLWIG), 73 to 93 (TMGGIMILIAIGVSTLLWADL), 98 to 118 (VWFVLFVLFGYGAVGFVDDYW), 132 to 152 (WKYFWLSVIALIAVFGIYAVG), 168 to 188 (FMPQLGIFFIILSYFVIVGTS), 199 to 219 (GLAIVPTIMVASAFALIAWAT), 236 to 256 (AGELVILCTAIVGAGLGFLWY), 263 to 283 (VFMGDVGSLSLGGALGTIAVL), 288 to 308 (LLLVIMGGVFVVEALSVILQV), and 338 to 358 (VIVRFWIITLMLVLIGLVTLK).

The protein belongs to the glycosyltransferase 4 family. MraY subfamily. The cofactor is Mg(2+).

Its subcellular location is the cell inner membrane. It catalyses the reaction UDP-N-acetyl-alpha-D-muramoyl-L-alanyl-gamma-D-glutamyl-meso-2,6-diaminopimeloyl-D-alanyl-D-alanine + di-trans,octa-cis-undecaprenyl phosphate = di-trans,octa-cis-undecaprenyl diphospho-N-acetyl-alpha-D-muramoyl-L-alanyl-D-glutamyl-meso-2,6-diaminopimeloyl-D-alanyl-D-alanine + UMP. The protein operates within cell wall biogenesis; peptidoglycan biosynthesis. Functionally, catalyzes the initial step of the lipid cycle reactions in the biosynthesis of the cell wall peptidoglycan: transfers peptidoglycan precursor phospho-MurNAc-pentapeptide from UDP-MurNAc-pentapeptide onto the lipid carrier undecaprenyl phosphate, yielding undecaprenyl-pyrophosphoryl-MurNAc-pentapeptide, known as lipid I. This chain is Phospho-N-acetylmuramoyl-pentapeptide-transferase, found in Actinobacillus pleuropneumoniae serotype 3 (strain JL03).